Here is a 423-residue protein sequence, read N- to C-terminus: Serpin B12 (423 aa).

Basic and acidic residues predominate over residues 63 to 72 (LSKDEHKEPN). Positions 63 to 106 (LSKDEHKEPNDPSPQSESKASDSSLEGQKQTSASQDQQGESTND) are disordered. Polar residues predominate over residues 75–106 (SPQSESKASDSSLEGQKQTSASQDQQGESTND).

It belongs to the serpin family. Ov-serpin subfamily. Interacts with SLFN12; as part of a pathway regulating cell differentiation.

The protein localises to the cytoplasm. Its function is as follows. Inhibits trypsin and plasmin, but not thrombin, coagulation factor Xa, or urokinase-type plasminogen activator. May play a role in cell differentiation. This chain is Serpin B12 (Serpinb12), found in Mus musculus (Mouse).